Here is a 103-residue protein sequence, read N- to C-terminus: Histone H4 (103 aa).

Residues 1–14 are compositionally biased toward gly residues; it reads MTGRGKGGKGLGKG. The segment at 1–20 is disordered; it reads MTGRGKGGKGLGKGGAKRHR. 2 positions are modified to N6-acetyl-N6-methyllysine; alternate: lysine 6 and lysine 13. Residues 17 to 21 mediate DNA binding; the sequence is KRHRK.

It belongs to the histone H4 family. In terms of assembly, the nucleosome is a histone octamer containing two molecules each of H2A, H2B, H3 and H4 assembled in one H3-H4 heterotetramer and two H2A-H2B heterodimers. The octamer wraps approximately 147 bp of DNA.

The protein resides in the nucleus. It is found in the chromosome. Core component of nucleosome. Nucleosomes wrap and compact DNA into chromatin, limiting DNA accessibility to the cellular machineries which require DNA as a template. Histones thereby play a central role in transcription regulation, DNA repair, DNA replication and chromosomal stability. DNA accessibility is regulated via a complex set of post-translational modifications of histones, also called histone code, and nucleosome remodeling. The chain is Histone H4 (His4) from Myrmica ruginodis (Red ant).